Consider the following 791-residue polypeptide: Outer membrane protein assembly factor BamA (791 aa).

5 consecutive POTRA domains span residues 59 to 130, 131 to 209, 212 to 298, 301 to 383, and 386 to 459; these read NAIA…VTEK, PRID…VEEG, LYIK…VKEG, YKLG…IRKR, and VYIN…VKEQ.

This sequence belongs to the BamA family. As to quaternary structure, part of the Bam complex.

Its subcellular location is the cell outer membrane. Part of the outer membrane protein assembly complex, which is involved in assembly and insertion of beta-barrel proteins into the outer membrane. In Nitratidesulfovibrio vulgaris (strain ATCC 29579 / DSM 644 / CCUG 34227 / NCIMB 8303 / VKM B-1760 / Hildenborough) (Desulfovibrio vulgaris), this protein is Outer membrane protein assembly factor BamA.